Here is a 68-residue protein sequence, read N- to C-terminus: Large ribosomal subunit protein bL35 (68 aa).

This sequence belongs to the bacterial ribosomal protein bL35 family.

This is Large ribosomal subunit protein bL35 from Rickettsia canadensis (strain McKiel).